Here is a 307-residue protein sequence, read N- to C-terminus: N-acetylmuramic acid 6-phosphate etherase (307 aa).

Residues 62-225 enclose the SIS domain; the sequence is IVAAFQKGGR…TTASMIRIGK (164 aa). Residue Glu90 is the Proton donor of the active site. Glu121 is an active-site residue.

The protein belongs to the GCKR-like family. MurNAc-6-P etherase subfamily. As to quaternary structure, homodimer.

It carries out the reaction N-acetyl-D-muramate 6-phosphate + H2O = N-acetyl-D-glucosamine 6-phosphate + (R)-lactate. It functions in the pathway amino-sugar metabolism; 1,6-anhydro-N-acetylmuramate degradation. Its pathway is amino-sugar metabolism; N-acetylmuramate degradation. It participates in cell wall biogenesis; peptidoglycan recycling. Specifically catalyzes the cleavage of the D-lactyl ether substituent of MurNAc 6-phosphate, producing GlcNAc 6-phosphate and D-lactate. Together with AnmK, is also required for the utilization of anhydro-N-acetylmuramic acid (anhMurNAc) either imported from the medium or derived from its own cell wall murein, and thus plays a role in cell wall recycling. This is N-acetylmuramic acid 6-phosphate etherase from Rhizobium rhizogenes (strain K84 / ATCC BAA-868) (Agrobacterium radiobacter).